Reading from the N-terminus, the 316-residue chain is Glutathione synthetase (316 aa).

The 187-residue stretch at 124–310 (EKLFTAWFPE…ITGKLMDAIE (187 aa)) folds into the ATP-grasp domain. Position 150–207 (150–207 (FREEHGDVILKPLDGMGGASIFRVKENDPNVSVIIETLTNHGQNYAMAQTFVPDISNG)) interacts with ATP. Mg(2+) is bound by residues E281 and N283.

The protein belongs to the prokaryotic GSH synthase family. Requires Mg(2+) as cofactor. Mn(2+) serves as cofactor.

It carries out the reaction gamma-L-glutamyl-L-cysteine + glycine + ATP = glutathione + ADP + phosphate + H(+). It functions in the pathway sulfur metabolism; glutathione biosynthesis; glutathione from L-cysteine and L-glutamate: step 2/2. This is Glutathione synthetase from Vibrio parahaemolyticus serotype O3:K6 (strain RIMD 2210633).